The sequence spans 207 residues: Small ribosomal subunit protein uS4 (207 aa).

The S4 RNA-binding domain maps to 96 to 156 (SRLDNVVYRM…KKSHNQSRIY (61 aa)).

The protein belongs to the universal ribosomal protein uS4 family. In terms of assembly, part of the 30S ribosomal subunit. Contacts protein S5. The interaction surface between S4 and S5 is involved in control of translational fidelity.

In terms of biological role, one of the primary rRNA binding proteins, it binds directly to 16S rRNA where it nucleates assembly of the body of the 30S subunit. Functionally, with S5 and S12 plays an important role in translational accuracy. In Blochmanniella floridana, this protein is Small ribosomal subunit protein uS4.